The following is a 376-amino-acid chain: Glutamate 5-kinase (376 aa).

K15 serves as a coordination point for ATP. Residues S56, D143, and N155 each coordinate substrate. ATP is bound at residue 175–176 (SD). Residues 281-358 (KGTLTIDAGA…PDVMMILGIS (78 aa)) form the PUA domain.

The protein belongs to the glutamate 5-kinase family.

Its subcellular location is the cytoplasm. The catalysed reaction is L-glutamate + ATP = L-glutamyl 5-phosphate + ADP. It participates in amino-acid biosynthesis; L-proline biosynthesis; L-glutamate 5-semialdehyde from L-glutamate: step 1/2. In terms of biological role, catalyzes the transfer of a phosphate group to glutamate to form L-glutamate 5-phosphate. This is Glutamate 5-kinase from Rhodopseudomonas palustris (strain BisB5).